The following is a 168-amino-acid chain: Lipoprotein signal peptidase (168 aa).

Transmembrane regions (helical) follow at residues 8 to 28, 70 to 90, and 104 to 124; these read TLLVITLFVLIDWVTKLVVLL, KYFLFLLRIFVILGLLAYLFF, and VLLCAGAIGNVGDIIFYGHIV. Residues Asp-125 and Asp-143 contribute to the active site. Residues 134–154 form a helical membrane-spanning segment; that stretch reads WAFPTFNVADVLISLGTLLLV.

This sequence belongs to the peptidase A8 family.

Its subcellular location is the cell inner membrane. The enzyme catalyses Release of signal peptides from bacterial membrane prolipoproteins. Hydrolyzes -Xaa-Yaa-Zaa-|-(S,diacylglyceryl)Cys-, in which Xaa is hydrophobic (preferably Leu), and Yaa (Ala or Ser) and Zaa (Gly or Ala) have small, neutral side chains.. It functions in the pathway protein modification; lipoprotein biosynthesis (signal peptide cleavage). Its function is as follows. This protein specifically catalyzes the removal of signal peptides from prolipoproteins. In Chlamydia pneumoniae (Chlamydophila pneumoniae), this protein is Lipoprotein signal peptidase.